Reading from the N-terminus, the 82-residue chain is Sec-independent protein translocase protein TatA (82 aa).

Residues 1–21 (MGLSTTHLIIFLVIIVLIFGT) form a helical membrane-spanning segment.

The protein belongs to the TatA/E family. As to quaternary structure, the Tat system comprises two distinct complexes: a TatABC complex, containing multiple copies of TatA, TatB and TatC subunits, and a separate TatA complex, containing only TatA subunits. Substrates initially bind to the TatABC complex, which probably triggers association of the separate TatA complex to form the active translocon.

It localises to the cell inner membrane. Its function is as follows. Part of the twin-arginine translocation (Tat) system that transports large folded proteins containing a characteristic twin-arginine motif in their signal peptide across membranes. TatA could form the protein-conducting channel of the Tat system. The protein is Sec-independent protein translocase protein TatA of Leptothrix cholodnii (strain ATCC 51168 / LMG 8142 / SP-6) (Leptothrix discophora (strain SP-6)).